We begin with the raw amino-acid sequence, 698 residues long: Protein artemis (698 aa).

A Phosphothreonine modification is found at Thr380. At Ser385 the chain carries Phosphoserine. Disordered stretches follow at residues 445–485, 505–595, and 620–669; these read ANFV…DPDV, LENL…DSIS, and NGVP…LPKP. Acidic residues predominate over residues 449–461; sequence DCDESNSDSEGEL. Residues 508–521 show a composition bias toward polar residues; it reads LPSSIETGGSQSPK. Residues 538-551 are compositionally biased toward low complexity; that stretch reads THISSQNSSQSTHI. The span at 552–583 shows a compositional bias: polar residues; that stretch reads TDQGSQGWDSQCDTVLLSSQEKSGGDSTSLNK. Residues 641-655 show a composition bias toward low complexity; the sequence is TSLTSTQADSQSSSD. Position 650 is a phosphoserine; by ATM (Ser650).

Belongs to the DNA repair metallo-beta-lactamase (DRMBL) family. As to quaternary structure, interacts with LIG4; the interaction is direct. Interacts with ATM. Interacts with BRCA1. Interacts with PRKDC. Interacts with TP53BP1. Also exhibits ATM- and phosphorylation-dependent interaction with the MRN complex, composed of MRE11, RAD50, and NBN. In terms of processing, phosphorylation on undefined residues by PRKDC may stimulate endonucleolytic activity on 5' and 3' hairpins and overhangs. PRKDC must remain present, even after phosphorylation, for efficient hairpin opening. Also phosphorylated by ATM in response to ionizing radiation (IR) and by ATR in response to ultraviolet (UV) radiation.

The protein resides in the nucleus. Required for V(D)J recombination, the process by which exons encoding the antigen-binding domains of immunoglobulins and T-cell receptor proteins are assembled from individual V, (D), and J gene segments. V(D)J recombination is initiated by the lymphoid specific RAG endonuclease complex, which generates site specific DNA double strand breaks (DSBs). These DSBs present two types of DNA end structures: hairpin sealed coding ends and phosphorylated blunt signal ends. These ends are independently repaired by the non homologous end joining (NHEJ) pathway to form coding and signal joints respectively. This protein exhibits single-strand specific 5'-3' exonuclease activity in isolation, and acquires endonucleolytic activity on 5' and 3' hairpins and overhangs when in a complex with PRKDC. The latter activity is required specifically for the resolution of closed hairpins prior to the formation of the coding joint. May also be required for the repair of complex DSBs induced by ionizing radiation, which require substantial end-processing prior to religation by NHEJ. The chain is Protein artemis (Dclre1c) from Rattus norvegicus (Rat).